We begin with the raw amino-acid sequence, 393 residues long: Acetylornithine aminotransferase (393 aa).

Residues 96 to 97 (GT) and Phe-129 contribute to the pyridoxal 5'-phosphate site. Arg-132 serves as a coordination point for N(2)-acetyl-L-ornithine. 214–217 (DEVQ) lines the pyridoxal 5'-phosphate pocket. At Lys-243 the chain carries N6-(pyridoxal phosphate)lysine. Ser-271 provides a ligand contact to N(2)-acetyl-L-ornithine. Thr-272 is a binding site for pyridoxal 5'-phosphate.

This sequence belongs to the class-III pyridoxal-phosphate-dependent aminotransferase family. ArgD subfamily. Homodimer. The cofactor is pyridoxal 5'-phosphate.

The protein localises to the cytoplasm. It carries out the reaction N(2)-acetyl-L-ornithine + 2-oxoglutarate = N-acetyl-L-glutamate 5-semialdehyde + L-glutamate. It functions in the pathway amino-acid biosynthesis; L-arginine biosynthesis; N(2)-acetyl-L-ornithine from L-glutamate: step 4/4. This is Acetylornithine aminotransferase from Rhodobacter capsulatus (strain ATCC BAA-309 / NBRC 16581 / SB1003).